The following is a 359-amino-acid chain: Ribosomal RNA small subunit methyltransferase H (359 aa).

S-adenosyl-L-methionine-binding positions include 39–41, aspartate 58, phenylalanine 87, aspartate 108, and glutamine 115; that span reads AGH. The interval 339–359 is disordered; that stretch reads IQGSASPGRAKNTARIRTRRG. Basic residues predominate over residues 350-359; the sequence is NTARIRTRRG.

This sequence belongs to the methyltransferase superfamily. RsmH family.

It is found in the cytoplasm. It catalyses the reaction cytidine(1402) in 16S rRNA + S-adenosyl-L-methionine = N(4)-methylcytidine(1402) in 16S rRNA + S-adenosyl-L-homocysteine + H(+). Its function is as follows. Specifically methylates the N4 position of cytidine in position 1402 (C1402) of 16S rRNA. The polypeptide is Ribosomal RNA small subunit methyltransferase H (Bifidobacterium longum subsp. infantis (strain ATCC 15697 / DSM 20088 / JCM 1222 / NCTC 11817 / S12)).